Here is a 539-residue protein sequence, read N- to C-terminus: Chaperonin GroEL (539 aa).

Residues 29 to 32 (TLGP), 86 to 90 (DGTTT), glycine 413, 477 to 479 (NAA), and aspartate 493 each bind ATP.

This sequence belongs to the chaperonin (HSP60) family. In terms of assembly, forms a cylinder of 14 subunits composed of two heptameric rings stacked back-to-back. Interacts with the co-chaperonin GroES.

The protein localises to the cytoplasm. The enzyme catalyses ATP + H2O + a folded polypeptide = ADP + phosphate + an unfolded polypeptide.. In terms of biological role, together with its co-chaperonin GroES, plays an essential role in assisting protein folding. The GroEL-GroES system forms a nano-cage that allows encapsulation of the non-native substrate proteins and provides a physical environment optimized to promote and accelerate protein folding. The protein is Chaperonin GroEL of Clavibacter michiganensis subsp. michiganensis (strain NCPPB 382).